Here is a 366-residue protein sequence, read N- to C-terminus: Inactive protein RESTRICTED TEV MOVEMENT 2 (366 aa).

The region spanning 14 to 121 (VQYEDFVPKS…LPETSRTEAA (108 aa)) is the sHSP domain. One copy of the A-1 repeat lies at 129–133 (LEEKR). Residues 129 to 220 (LEEKRLLEES…LEERRLEERK (92 aa)) are 6 X 5 AA repeats A of L-E-E-[SKR]-[ERK]. An A-2 repeat occupies 135–139 (LEESR). Residues 156–160 (LEEKE) form an A-3 repeat. The stretch at 163–176 (IRKLQEEAKAKEEA) is one B-1 repeat. A 3 X 14 AA repeats B of [IMA]-[RK]-K-L-Q-E-E-A-K-A-K-E-[EK]-[LA] region spans residues 163–206 (IRKLQEEAKAKEEAEMRKLQEEAKANEEAAAKKLQEEIEAKEKL). A B-2 repeat occupies 178-191 (MRKLQEEAKANEEA). A B-3 repeat occupies 193–205 (AKKLQEEIEAKEK). The A-4 repeat unit spans residues 206–210 (LEERK). One copy of the A-5 repeat lies at 211-215 (LEERR). The A-6 repeat unit spans residues 216–220 (LEERK). Residues 322–342 (LMMNVGVAALVIFALGAYVSY) traverse the membrane as a helical segment. The segment at 345-366 (CSSSSSSSSSSPSSSSSSTKPE) is disordered. Over residues 346 to 366 (SSSSSSSSSSPSSSSSSTKPE) the composition is skewed to low complexity.

It belongs to the small heat shock protein (HSP20) family.

It is found in the cell membrane. In terms of biological role, seems to not be involved in heat resistance. Unable to mediate restriction of long-distance movement of the pathogenic tobacco etch virus (TEV) without causing a hypersensitive response or inducing systemic acquired resistance. This Arabidopsis thaliana (Mouse-ear cress) protein is Inactive protein RESTRICTED TEV MOVEMENT 2 (RTM2).